A 451-amino-acid polypeptide reads, in one-letter code: uncharacterized protein (451 aa).

Positions 1–18 are cleaved as a signal peptide; it reads MRTRITLALAVLLLLLAG. Residue Cys-19 is the site of N-palmitoyl cysteine attachment. Cys-19 is lipidated: S-diacylglycerol cysteine. The tract at residues 424–451 is disordered; the sequence is TSADPPPGVPRAGKRNIRDATSRLPSTP.

The protein resides in the cell membrane. In terms of biological role, may participate in oleandomycin glycosylation and secretion during antibiotic production. This is an uncharacterized protein from Streptomyces antibioticus.